A 380-amino-acid polypeptide reads, in one-letter code: Queuine tRNA-ribosyltransferase (380 aa).

Asp96 functions as the Proton acceptor in the catalytic mechanism. Residues 96–100 (DSGGF), Asp150, Gln193, and Gly220 each bind substrate. The tract at residues 251–257 (GVGAPDS) is RNA binding. Catalysis depends on Asp270, which acts as the Nucleophile. The RNA binding; important for wobble base 34 recognition stretch occupies residues 275–279 (TRIAR). The Zn(2+) site is built by Cys308, Cys310, Cys313, and His339.

It belongs to the queuine tRNA-ribosyltransferase family. Homodimer. Within each dimer, one monomer is responsible for RNA recognition and catalysis, while the other monomer binds to the replacement base PreQ1. Requires Zn(2+) as cofactor.

The enzyme catalyses 7-aminomethyl-7-carbaguanine + guanosine(34) in tRNA = 7-aminomethyl-7-carbaguanosine(34) in tRNA + guanine. Its pathway is tRNA modification; tRNA-queuosine biosynthesis. In terms of biological role, catalyzes the base-exchange of a guanine (G) residue with the queuine precursor 7-aminomethyl-7-deazaguanine (PreQ1) at position 34 (anticodon wobble position) in tRNAs with GU(N) anticodons (tRNA-Asp, -Asn, -His and -Tyr). Catalysis occurs through a double-displacement mechanism. The nucleophile active site attacks the C1' of nucleotide 34 to detach the guanine base from the RNA, forming a covalent enzyme-RNA intermediate. The proton acceptor active site deprotonates the incoming PreQ1, allowing a nucleophilic attack on the C1' of the ribose to form the product. After dissociation, two additional enzymatic reactions on the tRNA convert PreQ1 to queuine (Q), resulting in the hypermodified nucleoside queuosine (7-(((4,5-cis-dihydroxy-2-cyclopenten-1-yl)amino)methyl)-7-deazaguanosine). This Streptococcus agalactiae serotype Ia (strain ATCC 27591 / A909 / CDC SS700) protein is Queuine tRNA-ribosyltransferase.